The following is a 40-amino-acid chain: Photosystem II reaction center protein J (40 aa).

Residues 8 to 28 form a helical membrane-spanning segment; the sequence is IPLWLVGTVTGIPVIGLIGVF.

This sequence belongs to the PsbJ family. In terms of assembly, PSII is composed of 1 copy each of membrane proteins PsbA, PsbB, PsbC, PsbD, PsbE, PsbF, PsbH, PsbI, PsbJ, PsbK, PsbL, PsbM, PsbT, PsbX, PsbY, PsbZ, Psb30/Ycf12, at least 3 peripheral proteins of the oxygen-evolving complex and a large number of cofactors. It forms dimeric complexes.

The protein localises to the plastid. The protein resides in the chloroplast thylakoid membrane. Its function is as follows. One of the components of the core complex of photosystem II (PSII). PSII is a light-driven water:plastoquinone oxidoreductase that uses light energy to abstract electrons from H(2)O, generating O(2) and a proton gradient subsequently used for ATP formation. It consists of a core antenna complex that captures photons, and an electron transfer chain that converts photonic excitation into a charge separation. The sequence is that of Photosystem II reaction center protein J from Musa acuminata (Banana).